Consider the following 239-residue polypeptide: Fatty acid metabolism regulator protein (239 aa).

The HTH gntR-type domain occupies 6 to 74 (QSPAGFAEEY…HGKPTKVNNF (69 aa)). The segment at residues 34–53 (ERELSELIGVTRTTLREVLQ) is a DNA-binding region (H-T-H motif).

As to quaternary structure, homodimer.

The protein resides in the cytoplasm. Its function is as follows. Multifunctional regulator of fatty acid metabolism. This Klebsiella pneumoniae subsp. pneumoniae (strain ATCC 700721 / MGH 78578) protein is Fatty acid metabolism regulator protein.